Reading from the N-terminus, the 275-residue chain is Dermonecrotic toxin SpeSicTox-betaIIA2ii (275 aa).

Residue His5 is part of the active site. Residues Glu25 and Asp27 each coordinate Mg(2+). His41 serves as the catalytic Nucleophile. Disulfide bonds link Cys45–Cys51 and Cys47–Cys190. Asp85 lines the Mg(2+) pocket.

The protein belongs to the arthropod phospholipase D family. Class II subfamily. The cofactor is Mg(2+). Expressed by the venom gland.

The protein resides in the secreted. It carries out the reaction an N-(acyl)-sphingosylphosphocholine = an N-(acyl)-sphingosyl-1,3-cyclic phosphate + choline. It catalyses the reaction an N-(acyl)-sphingosylphosphoethanolamine = an N-(acyl)-sphingosyl-1,3-cyclic phosphate + ethanolamine. The enzyme catalyses a 1-acyl-sn-glycero-3-phosphocholine = a 1-acyl-sn-glycero-2,3-cyclic phosphate + choline. The catalysed reaction is a 1-acyl-sn-glycero-3-phosphoethanolamine = a 1-acyl-sn-glycero-2,3-cyclic phosphate + ethanolamine. Dermonecrotic toxins cleave the phosphodiester linkage between the phosphate and headgroup of certain phospholipids (sphingolipid and lysolipid substrates), forming an alcohol (often choline) and a cyclic phosphate. This toxin acts on sphingomyelin (SM). It may also act on ceramide phosphoethanolamine (CPE), lysophosphatidylcholine (LPC) and lysophosphatidylethanolamine (LPE), but not on lysophosphatidylserine (LPS), and lysophosphatidylglycerol (LPG). It acts by transphosphatidylation, releasing exclusively cyclic phosphate products as second products. Induces dermonecrosis, hemolysis, increased vascular permeability, edema, inflammatory response, and platelet aggregation. The protein is Dermonecrotic toxin SpeSicTox-betaIIA2ii of Sicarius peruensis (Six-eyed sand spider).